Reading from the N-terminus, the 431-residue chain is Enolase (431 aa).

Glutamine 175 lines the (2R)-2-phosphoglycerate pocket. Glutamate 217 acts as the Proton donor in catalysis. Mg(2+)-binding residues include aspartate 254, glutamate 295, and aspartate 322. 4 residues coordinate (2R)-2-phosphoglycerate: lysine 347, arginine 376, serine 377, and lysine 398. Residue lysine 347 is the Proton acceptor of the active site.

It belongs to the enolase family. Requires Mg(2+) as cofactor.

The protein localises to the cytoplasm. It is found in the secreted. The protein resides in the cell surface. It carries out the reaction (2R)-2-phosphoglycerate = phosphoenolpyruvate + H2O. It participates in carbohydrate degradation; glycolysis; pyruvate from D-glyceraldehyde 3-phosphate: step 4/5. In terms of biological role, catalyzes the reversible conversion of 2-phosphoglycerate (2-PG) into phosphoenolpyruvate (PEP). It is essential for the degradation of carbohydrates via glycolysis. This chain is Enolase, found in Anaplasma marginale (strain St. Maries).